A 494-amino-acid chain; its full sequence is Cytochrome P450 2A5 (494 aa).

Position 131 is a phosphoserine (serine 131). An N6-acetyllysine modification is found at lysine 379. Cysteine 439 serves as a coordination point for heme.

This sequence belongs to the cytochrome P450 family. Requires heme as cofactor. As to expression, liver, with a strong circadian rhythmicity. Circadian expression is regulated by DBP.

Its subcellular location is the endoplasmic reticulum membrane. It is found in the microsome membrane. The enzyme catalyses an organic molecule + reduced [NADPH--hemoprotein reductase] + O2 = an alcohol + oxidized [NADPH--hemoprotein reductase] + H2O + H(+). Its function is as follows. Exhibits a high coumarin 7-hydroxylase activity. In Mus musculus (Mouse), this protein is Cytochrome P450 2A5 (Cyp2a5).